The sequence spans 345 residues: tRNA N6-adenosine threonylcarbamoyltransferase (345 aa).

H111 and H115 together coordinate Fe cation. Residues 134 to 138 (LVSGG), D167, G180, and N276 contribute to the substrate site. Residue D304 participates in Fe cation binding.

This sequence belongs to the KAE1 / TsaD family. Fe(2+) is required as a cofactor.

Its subcellular location is the cytoplasm. It carries out the reaction L-threonylcarbamoyladenylate + adenosine(37) in tRNA = N(6)-L-threonylcarbamoyladenosine(37) in tRNA + AMP + H(+). In terms of biological role, required for the formation of a threonylcarbamoyl group on adenosine at position 37 (t(6)A37) in tRNAs that read codons beginning with adenine. Is involved in the transfer of the threonylcarbamoyl moiety of threonylcarbamoyl-AMP (TC-AMP) to the N6 group of A37, together with TsaE and TsaB. TsaD likely plays a direct catalytic role in this reaction. This is tRNA N6-adenosine threonylcarbamoyltransferase from Alcanivorax borkumensis (strain ATCC 700651 / DSM 11573 / NCIMB 13689 / SK2).